The primary structure comprises 293 residues: MWQQLMVTVDEDLAEDVSDALMDAGALSVSFLDAGDQPLFEPPPGTTPVWAQTRVVGLFEEGGDLAAIRSALGGRFGDERLRDWSEEALADQVWERTWLEHFRPMRFGSRLWVCPTGFTVEDTDAVVMSLDPGLAFGTGTHPTTALCLEWLDAADLQGASVLDYGCGSGILGIAAALLGAAGVHAVDIDPQALAATVENARKNRVGDRIEVASPGGLADFDSDIALANILANPLMELADALRSRVRPGGRIVLSGILAEQADAVASVYARKGFEMEPAVFREGWVRLAGVRRT.

Positions 144, 165, 187, and 228 each coordinate S-adenosyl-L-methionine.

Belongs to the methyltransferase superfamily. PrmA family.

It localises to the cytoplasm. The enzyme catalyses L-lysyl-[protein] + 3 S-adenosyl-L-methionine = N(6),N(6),N(6)-trimethyl-L-lysyl-[protein] + 3 S-adenosyl-L-homocysteine + 3 H(+). Functionally, methylates ribosomal protein L11. The chain is Ribosomal protein L11 methyltransferase from Methylococcus capsulatus (strain ATCC 33009 / NCIMB 11132 / Bath).